A 1304-amino-acid polypeptide reads, in one-letter code: Myosin-1 (1304 aa).

Residues 1-12 (MAIVKRGVRTKN) show a composition bias toward basic residues. The tract at residues 1-24 (MAIVKRGVRTKNKQSQQPSKSGIK) is disordered. Positions 36–730 (VGVSDLTLLS…TLFALEDMRD (695 aa)) constitute a Myosin motor domain. 129-136 (GESGAGKT) contributes to the ATP binding site. Residue S364 is modified to Phosphoserine. Residues 413–496 (SIGILDIYGF…PGLFAALNDS (84 aa)) are actin-binding. IQ domains lie at 734–754 (HNMAARIQRAWRRYIKRKDDA) and 755–780 (ARLIQSAWKNKTHGNQFEQLRDYGNG). The TH1 domain occupies 788–978 (RRRMSMLGSR…TVTVRQGLPG (191 aa)). Disordered stretches follow at residues 963 to 1162 (DSYK…TYKA) and 1214 to 1304 (ECDP…DDDW). 2 stretches are compositionally biased toward polar residues: residues 964–983 (SYKSGTVTVRQGLPGNSQNP) and 1001–1012 (RGSNMRSTSSYQ). Composition is skewed to low complexity over residues 1029–1052 (QPPVQQTQQRVVPPVQSQPKPQAQ), 1072–1096 (QPHAHPEQAAQAAQAAFHHTAPQAQ), and 1120–1140 (PSAPSRPARKTAPAPPAKKNV). Positions 1141–1156 (APPPPPAAASPPPKPK) are enriched in pro residues. The SH3 domain occupies 1155–1217 (PKFPTYKAAY…PAAYVVECDP (63 aa)). Low complexity-rich tracts occupy residues 1217–1227 (PPANSPAGNAK) and 1236–1256 (LNSASQAQQSQQQAQAPNGAG). Residues 1292-1304 (DSDEEDEEDDDDW) show a composition bias toward acidic residues.

This sequence belongs to the TRAFAC class myosin-kinesin ATPase superfamily. Myosin family. Post-translationally, phosphorylation of the TEDS site (Ser-364) is required for the polarization of the actin cytoskeleton. Phosphorylation probably activates the myosin-I ATPase activity.

The protein localises to the cytoplasm. The protein resides in the cytoskeleton. It localises to the actin patch. In terms of biological role, type-I myosin implicated in the organization of the actin cytoskeleton. Required for proper actin cytoskeleton polarization. At the cell cortex, assembles in patch-like structures together with proteins from the actin-polymerizing machinery and promotes actin assembly. Functions as actin nucleation-promoting factor (NPF) for the Arp2/3 complex. The chain is Myosin-1 (MYO1) from Debaryomyces hansenii (strain ATCC 36239 / CBS 767 / BCRC 21394 / JCM 1990 / NBRC 0083 / IGC 2968) (Yeast).